Consider the following 755-residue polypeptide: Polyribonucleotide nucleotidyltransferase (755 aa).

Positions 493 and 499 each coordinate Mg(2+). In terms of domain architecture, KH spans 560–619 (PRIMTIQIPVDKIGALIGPGGKTIRNICETTGAQIDIEDDGRVFITTPDGAAARQAISMI). Positions 629-698 (GDIFLGKVVS…TTGKISLSRR (70 aa)) constitute an S1 motif domain. Residues 699-755 (AVLTGETPEERKAAGAAPRPRPREEQRGGRDEPRSLRDELRGPRREGDRPRPRRRDD) are disordered. A compositionally biased stretch (basic and acidic residues) spans 719–755 (RPREEQRGGRDEPRSLRDELRGPRREGDRPRPRRRDD).

It belongs to the polyribonucleotide nucleotidyltransferase family. The cofactor is Mg(2+).

The protein resides in the cytoplasm. It catalyses the reaction RNA(n+1) + phosphate = RNA(n) + a ribonucleoside 5'-diphosphate. Involved in mRNA degradation. Catalyzes the phosphorolysis of single-stranded polyribonucleotides processively in the 3'- to 5'-direction. The protein is Polyribonucleotide nucleotidyltransferase of Chloroflexus aurantiacus (strain ATCC 29366 / DSM 635 / J-10-fl).